Consider the following 152-residue polypeptide: Superoxide dismutase [Cu-Zn] (152 aa).

Cu cation is bound by residues H45, H47, and H62. C56 and C145 are joined by a disulfide. The Zn(2+) site is built by H62, H70, H79, and D82. H119 is a binding site for Cu cation.

This sequence belongs to the Cu-Zn superoxide dismutase family. In terms of assembly, homodimer. It depends on Cu cation as a cofactor. Requires Zn(2+) as cofactor.

Its subcellular location is the cytoplasm. It catalyses the reaction 2 superoxide + 2 H(+) = H2O2 + O2. Destroys radicals which are normally produced within the cells and which are toxic to biological systems. The sequence is that of Superoxide dismutase [Cu-Zn] (SODCC) from Carica papaya (Papaya).